Consider the following 163-residue polypeptide: Neurotrophin-3 (163 aa).

The signal sequence occupies residues 1–3 (IQS). The propeptide occupies 4–119 (TSMDQGILTE…VLNRTSRRKR (116 aa)). N-linked (GlcNAc...) asparagine glycosylation occurs at Asn-112. A disordered region spans residues 112 to 132 (NRTSRRKREGKSHRGEYSVCD). Basic and acidic residues predominate over residues 123 to 132 (SHRGEYSVCD).

The protein belongs to the NGF-beta family.

It localises to the secreted. Seems to promote the survival of visceral and proprioceptive sensory neurons. The sequence is that of Neurotrophin-3 (NTF3) from Exiliboa placata (Oaxacan dwarf boa).